The sequence spans 220 residues: 2-hydroxy-3-keto-5-methylthiopentenyl-1-phosphate phosphatase (220 aa).

Belongs to the HAD-like hydrolase superfamily. MtnX family.

It carries out the reaction 2-hydroxy-5-methylsulfanyl-3-oxopent-1-enyl phosphate + H2O = 1,2-dihydroxy-5-(methylsulfanyl)pent-1-en-3-one + phosphate. The protein operates within amino-acid biosynthesis; L-methionine biosynthesis via salvage pathway; L-methionine from S-methyl-5-thio-alpha-D-ribose 1-phosphate: step 4/6. Dephosphorylates 2-hydroxy-3-keto-5-methylthiopentenyl-1-phosphate (HK-MTPenyl-1-P) yielding 1,2-dihydroxy-3-keto-5-methylthiopentene (DHK-MTPene). This is 2-hydroxy-3-keto-5-methylthiopentenyl-1-phosphate phosphatase from Geobacillus thermodenitrificans (strain NG80-2).